The chain runs to 238 residues: Pyridoxine 5'-phosphate synthase (238 aa).

3-amino-2-oxopropyl phosphate is bound at residue Asn7. 9–10 contributes to the 1-deoxy-D-xylulose 5-phosphate binding site; sequence DH. Arg18 is a binding site for 3-amino-2-oxopropyl phosphate. Residue His43 is the Proton acceptor of the active site. Arg45 and His50 together coordinate 1-deoxy-D-xylulose 5-phosphate. Residue Glu70 is the Proton acceptor of the active site. A 1-deoxy-D-xylulose 5-phosphate-binding site is contributed by Thr100. His190 functions as the Proton donor in the catalytic mechanism. 3-amino-2-oxopropyl phosphate contacts are provided by residues Gly191 and 212-213; that span reads GH.

The protein belongs to the PNP synthase family. As to quaternary structure, homooctamer; tetramer of dimers.

It is found in the cytoplasm. It catalyses the reaction 3-amino-2-oxopropyl phosphate + 1-deoxy-D-xylulose 5-phosphate = pyridoxine 5'-phosphate + phosphate + 2 H2O + H(+). It functions in the pathway cofactor biosynthesis; pyridoxine 5'-phosphate biosynthesis; pyridoxine 5'-phosphate from D-erythrose 4-phosphate: step 5/5. Its function is as follows. Catalyzes the complicated ring closure reaction between the two acyclic compounds 1-deoxy-D-xylulose-5-phosphate (DXP) and 3-amino-2-oxopropyl phosphate (1-amino-acetone-3-phosphate or AAP) to form pyridoxine 5'-phosphate (PNP) and inorganic phosphate. The sequence is that of Pyridoxine 5'-phosphate synthase from Prochlorococcus marinus (strain MIT 9312).